Here is a 125-residue protein sequence, read N- to C-terminus: Large ribosomal subunit protein bL12 (125 aa).

Belongs to the bacterial ribosomal protein bL12 family. As to quaternary structure, homodimer. Part of the ribosomal stalk of the 50S ribosomal subunit. Forms a multimeric L10(L12)X complex, where L10 forms an elongated spine to which 2 to 4 L12 dimers bind in a sequential fashion. Binds GTP-bound translation factors.

Its function is as follows. Forms part of the ribosomal stalk which helps the ribosome interact with GTP-bound translation factors. Is thus essential for accurate translation. The protein is Large ribosomal subunit protein bL12 of Rickettsia typhi (strain ATCC VR-144 / Wilmington).